A 914-amino-acid chain; its full sequence is TRPM8 channel-associated factor 3 (914 aa).

The Peptidase M60 domain maps to Asn-533 to Gly-832.

The protein belongs to the TCAF family.

Its function is as follows. May play a role in the regulation of the cation channel TRPM8 activity. This Rattus norvegicus (Rat) protein is TRPM8 channel-associated factor 3.